We begin with the raw amino-acid sequence, 443 residues long: NADH-quinone oxidoreductase subunit D 1 (443 aa).

The protein belongs to the complex I 49 kDa subunit family. NDH-1 is composed of 14 different subunits. Subunits NuoB, C, D, E, F, and G constitute the peripheral sector of the complex.

It localises to the cell membrane. It catalyses the reaction a quinone + NADH + 5 H(+)(in) = a quinol + NAD(+) + 4 H(+)(out). NDH-1 shuttles electrons from NADH, via FMN and iron-sulfur (Fe-S) centers, to quinones in the respiratory chain. The immediate electron acceptor for the enzyme in this species is believed to be a menaquinone. Couples the redox reaction to proton translocation (for every two electrons transferred, four hydrogen ions are translocated across the cytoplasmic membrane), and thus conserves the redox energy in a proton gradient. The protein is NADH-quinone oxidoreductase subunit D 1 of Streptomyces avermitilis (strain ATCC 31267 / DSM 46492 / JCM 5070 / NBRC 14893 / NCIMB 12804 / NRRL 8165 / MA-4680).